The following is a 262-amino-acid chain: MNILVVKTPEELAEVGYKLIEEVVKTKENPTLGMATGSSPLGIYAEMRKNKLDTSRVTTVNLDEYVNLPHEDKNSYHYFMQEQLFDHLPFKQTYVPNGMASDLEEECKRYEGILAANPVDLQILGIGENGHIGFNEPGTPFNSPTNIVELTESTRQANLRFFEKEEDVPTHAITMGIGSIMKAKQVLLVAMGAKKAEAVKELLQGEYSEECPATVLQRHPNVTVIADQEALSLCSEAIADEHRQVFTISDLLSDSRVGETAN.

Catalysis depends on Asp-63, which acts as the Proton acceptor; for enolization step. Asn-129 (for ring-opening step) is an active-site residue. His-131 (proton acceptor; for ring-opening step) is an active-site residue. Glu-136 functions as the For ring-opening step in the catalytic mechanism.

The protein belongs to the glucosamine/galactosamine-6-phosphate isomerase family. NagB subfamily.

It catalyses the reaction alpha-D-glucosamine 6-phosphate + H2O = beta-D-fructose 6-phosphate + NH4(+). It functions in the pathway amino-sugar metabolism; N-acetylneuraminate degradation; D-fructose 6-phosphate from N-acetylneuraminate: step 5/5. Functionally, catalyzes the reversible isomerization-deamination of glucosamine 6-phosphate (GlcN6P) to form fructose 6-phosphate (Fru6P) and ammonium ion. This Bacillus cereus (strain G9842) protein is Glucosamine-6-phosphate deaminase.